Consider the following 239-residue polypeptide: Peroxygenase (239 aa).

N-acetylglycine is present on G2. An EF-hand domain is found at 60–95 (HNMSVLQQRAAFFDRNNDGIVYPWETYQGFRAVGFG). Ca(2+) is bound by residues D73, N75, D77, and E84. Residues 116 to 125 (PSWIPSPVLS) carry the Proline-knot motif.

The protein belongs to the caleosin family. Homodimer. Heme b serves as cofactor. Ca(2+) is required as a cofactor. Expressed in pollen (at protein level). Not expressed in leaf, root, stem, tepal, ovary, style, filament or stigma (at protein level).

The protein localises to the lipid droplet. It is found in the microsome membrane. The enzyme catalyses RH + ROOH = ROH + ROH.. Calcium-binding peroxygenase involved in the degradation of storage lipid in oil bodies. This is Peroxygenase from Lilium longiflorum (Trumpet lily).